We begin with the raw amino-acid sequence, 415 residues long: Pectin acetylesterase 12 (415 aa).

The first 20 residues, 1 to 20 (MVKLLLVGFVVAGIILGTQA), serve as a signal peptide directing secretion. Asn27 is a glycosylation site (N-linked (GlcNAc...) asparagine). Active-site charge relay system residues include Ser197, Asp293, and His360.

This sequence belongs to the pectinacetylesterase family.

It localises to the secreted. The protein localises to the cell wall. Hydrolyzes acetyl esters in homogalacturonan regions of pectin. In type I primary cell wall, galacturonic acid residues of pectin can be acetylated at the O-2 and O-3 positions. Decreasing the degree of acetylation of pectin gels in vitro alters their physical properties. In Arabidopsis thaliana (Mouse-ear cress), this protein is Pectin acetylesterase 12.